Here is a 768-residue protein sequence, read N- to C-terminus: MEINEEAMAAHKRAFLDFLDQDVGKGVYMQAVRDMVQNKRHRLIIGMDDLRNHNLDLARRVIRTPGEYMQPASDAVSEVARNLDPKFLKEGERVMVGFSGPFGFHRVTPRDLMSSFIGTMVCVEGIVTKCSLVRPKVVKSVHFCPVTGDFLSREYRDITSFVGLPTGSVYPTRDDNGNLLVTEYGMCEYKDHQTLSMQEVPENSAPGQLPRTVDVIVEDDLVDCCKPGDRVSIVGVYKALPGKSKGSVSGVFRTVLIANNVSLLNKEANAPVYTREDLKRMKEISRRNDTFDLLGNSLAPSIYGHLWIKKAVVLLMLGGVEKNLKNGTHLRGDINMMMVGDPSVAKSQLLRAVMNIAPLAISTTGRGSSGVGLTAAVTSDQETGERRLEAGAMVLADRGVVCIDEFDKMNDQDRVAIHEVMEQQTVTIAKAGIHASLNARCSVIAAANPIYGTYDRSLTPTKNIGLPDSLLSRFDLLFIVLDQMDPEIDRQISEHVARMHRYCTDDGGARSLDKEGYAEEDDGDANAAIFVKYDRMLHGQDRRRGKKSKQDRLTVKFLKKYIHYAKNLIQPRLTDEASDHIATSYAELRDGSANAKSGGGTLPITARTLESIIRLSTAHAKMKLRHEVLKSDVEAALQVLNFAIYHKELTEMEEREQKEMEMKQQAEHDAGATGGTVDGHGSSGNDPMDVDVGSNDQNVSAERIEAFEALLGQHVLANHIDQMSIDEIEQMVNRESTAPYTRSQVEFILERMQDANRVMIRDGVVRII.

Positions 290-497 (TFDLLGNSLA…IDRQISEHVA (208 aa)) constitute an MCM domain. An ATP-binding site is contributed by 340 to 347 (GDPSVAKS). The Arginine finger motif lies at 472–475 (SRFD). Positions 662 to 687 (MKQQAEHDAGATGGTVDGHGSSGNDP) are disordered. The span at 672 to 682 (ATGGTVDGHGS) shows a compositional bias: gly residues.

This sequence belongs to the MCM family.

It is found in the nucleus. The enzyme catalyses ATP + H2O = ADP + phosphate + H(+). Acts as a factor that allows the DNA to undergo a single round of replication per cell cycle. Required for DNA replication and cell proliferation. May act as a component of the MCM complex which is the putative replicative helicase of the replication licensing system in eukaryotic cells. In Zea mays (Maize), this protein is DNA replication licensing factor MCM3 homolog 1 (ROA1).